Reading from the N-terminus, the 368-residue chain is MIRIYTQQTQGQAWLSNHQQKSVVFACGLGFTDTALIPNISAAGATPEARKYTAIADAECICHGFREKAIYPLPPLIVGASPAILSRAILSHYQIPAYLFDTGLWLKPDKNAVDCIDVSGQKARCVSTGKALEFSTVNKLFEQGLTWGETLATQYLNHLFVLGECVVAGTTTALGVLTGLGYDANQKVNSSYIECNHDLKWQIVQTGLKKANLNPNPDPFAVVAAVGDPMQIFVAGMAIALSRTQGVLLAGGTQMLAVYALMERICKYHSLDFDPKNIAVGTTRWVAEDPTGDTVGLAELIGEVPLLATQLSFQTSQYSQLQSYEQGYVKEGVGAGGLAIAAHLAYGATQAELLAMIERTIVPYLAAN.

It belongs to the UPF0284 family.

This is UPF0284 protein SYNPCC7002_A1742 from Picosynechococcus sp. (strain ATCC 27264 / PCC 7002 / PR-6) (Agmenellum quadruplicatum).